A 212-amino-acid polypeptide reads, in one-letter code: Thymidylate kinase (212 aa).

15–22 is a binding site for ATP; that stretch reads GIDGAGKS.

Belongs to the thymidylate kinase family.

The enzyme catalyses dTMP + ATP = dTDP + ADP. Functionally, phosphorylation of dTMP to form dTDP in both de novo and salvage pathways of dTTP synthesis. This Chromobacterium violaceum (strain ATCC 12472 / DSM 30191 / JCM 1249 / CCUG 213 / NBRC 12614 / NCIMB 9131 / NCTC 9757 / MK) protein is Thymidylate kinase.